The sequence spans 590 residues: Pre-mRNA-splicing factor CEF1 (590 aa).

HTH myb-type domains lie at 1–60 (MPPV…NPKL) and 63–110 (TEFS…ESED). 2 consecutive DNA-binding regions (H-T-H motif) follow at residues 33–56 (WSKVASLLQKKTARQSELRWNEYL) and 84–106 (WRTIADMMARPAQVCVERYNRLL). Composition is skewed to basic and acidic residues over residues 244–263 (FERKVNRKGLDGNKDKPSKK), 271–281 (HDENEHVEKAA), and 337–351 (LLPHDSGQEDNERSN). Disordered regions lie at residues 244-286 (FERK…GEST) and 336-355 (ELLPHDSGQEDNERSNIKSG). The interaction with PRP19 and self-interaction stretch occupies residues 460 to 490 (ANAINKEPHMVPEDTVDFLKEVESRMQHITQ).

The protein belongs to the CEF1 family. As to quaternary structure, belongs to the NTC complex (or PRP19-associated complex), composed of at least CEF1, CLF1, ISY1, NTC20, SNT309, SYF1, SYF2, and PRP19. The NTC complex associates with the spliceosome after the release of the U1 and U4 snRNAs and forms the CWC spliceosome subcomplex (or CEF1-associated complex) reminiscent of a late-stage spliceosome composed also of the U2, U5 and U6 snRNAs and at least BUD13, BUD31, BRR2, CDC40, CUS1, CWC2, CWC15, CWC21, CWC22, CWC23, CWC24, CWC25, CWC27, ECM2, HSH155, IST3, LEA1, MSL1, PRP8, PRP9, PRP11, PRP21, PRP22, PRP45, PRP46, SLU7, SMB1, SMD1, SMD2, SMD3, SMX2, SMX3, SNU114, SPP2, RSE1 and YJU2. Interacts with CLF1, ISY1, NTC20, PRP19, PRP46, SYF1 and SYF2.

The protein localises to the cytoplasm. The protein resides in the nucleus. Functionally, involved in pre-mRNA splicing and cell cycle control. Required for the binding of the NTC complex (or PRP19-associated complex) components to the spliceosome to mediate conformational rearrangement or to stabilize the structure of the spliceosome after U4 snRNA dissociation, which leads to spliceosome maturation. Its absence leads to an arrest of the cell cycle, possibly due to the inefficient splicing of TUB1. This is Pre-mRNA-splicing factor CEF1 (CEF1) from Saccharomyces cerevisiae (strain ATCC 204508 / S288c) (Baker's yeast).